Here is a 583-residue protein sequence, read N- to C-terminus: Radixin (583 aa).

Residues 5-295 enclose the FERM domain; sequence INVRVTTMDA…GNHELYMRRR (291 aa). 60–63 lines the a 1,2-diacyl-sn-glycero-3-phospho-(1D-myo-inositol) pocket; sequence KLNK. The residue at position 83 (K83) is an N6-succinyllysine. Position 278 (K278) interacts with a 1,2-diacyl-sn-glycero-3-phospho-(1D-myo-inositol). Disordered stretches follow at residues 310–336, 374–407, and 458–526; these read REEK…AEKE, ELDQ…AKQA, and KTKE…RVNK. Over residues 374–400 the composition is skewed to basic and acidic residues; the sequence is ELDQERKRAKEEAERLEKERRAAEEAK. A compositionally biased stretch (pro residues) spans 469–480; the sequence is APPPPPPPPVVP. Composition is skewed to basic and acidic residues over residues 483–492 and 506–525; these read ENEHDEHDEN and MNHR…ERVN. T564 is modified (phosphothreonine; by ROCK2).

In terms of assembly, interacts with CPNE1 (via VWFA domain) and CPNE4 (via VWFA domain). Binds NHERF1. Interacts with NHERF1, NHERF2, LAYN, MME/NEP and ICAM2. Interacts (via FERM domain) with SPN/CD43 cytoplasmic tail. Interacts with CD44. Interacts with CLIC5; may work together in a complex which also includes EZR and MYO6 to stabilize linkages between the plasma membrane and subjacent actin cytoskeleton at the base of stereocilia. Post-translationally, phosphorylated by tyrosine-protein kinases. Phosphorylation by ROCK2 suppresses the head-to-tail association of the N-terminal and C-terminal halves resulting in an opened conformation which is capable of actin and membrane-binding.

It localises to the cell membrane. The protein localises to the cytoplasm. Its subcellular location is the cytoskeleton. The protein resides in the cleavage furrow. It is found in the cell projection. It localises to the microvillus. The protein localises to the stereocilium. Its activity is regulated as follows. A head-to-tail association, of the N-terminal and C-terminal halves results in a closed conformation (inactive form) which is incapable of actin or membrane-binding. Its function is as follows. Probably plays a crucial role in the binding of the barbed end of actin filaments to the plasma membrane. The chain is Radixin (RDX) from Sus scrofa (Pig).